A 146-amino-acid polypeptide reads, in one-letter code: Zinc metalloproteinase-disintegrin salmosin-3 (146 aa).

Residues 1–57 form the Peptidase M12B domain; it reads SCPCDANSCIMSATLSNEPSSRFSDCSFSLPSRFSDCSFNQYSSDIIHYHECLLNEP. Intrachain disulfides connect Cys-2/Cys-37, Cys-4/Cys-9, Cys-68/Cys-87, Cys-79/Cys-97, Cys-81/Cys-92, Cys-91/Cys-114, Cys-105/Cys-111, Cys-110/Cys-135, and Cys-123/Cys-142. The region spanning 65–146 is the Disintegrin domain; it reads PPVCGNYYPE…GQSGVCPRNT (82 aa). The Cell attachment site motif lies at 127 to 129; the sequence is RGD.

This sequence belongs to the venom metalloproteinase (M12B) family. P-II subfamily. P-IIb sub-subfamily. In terms of assembly, monomer (disintegrin). The cofactor is Zn(2+). As to expression, expressed by the venom gland.

Its subcellular location is the secreted. In terms of biological role, snake venom zinc metalloproteinase that inhibits ADP-induced platelet aggregation (probably by binding integrin alpha-IIb/beta-3 (ITGA2B/ITGB3)) and degrades fibrinogen. This Gloydius brevicauda (Korean slamosa snake) protein is Zinc metalloproteinase-disintegrin salmosin-3.